Reading from the N-terminus, the 523-residue chain is Polypyrimidine tract-binding protein 3 (523 aa).

The interval 1–25 (MNSSTSAGVYANGNDNKKFKGDRPP) is disordered. RRM domains are found at residues 30-114 (RVLH…NLPN), 153-229 (LRII…FSKL), and 329-403 (SVLL…LSKH). Lysine 36 participates in a covalent cross-link: Glycyl lysine isopeptide (Lys-Gly) (interchain with G-Cter in SUMO2). Tyrosine 98 carries the phosphotyrosine modification. Threonine 109 is modified (phosphothreonine). Residue lysine 187 forms a Glycyl lysine isopeptide (Lys-Gly) (interchain with G-Cter in SUMO2) linkage. Position 394 is an N6-acetyllysine (lysine 394). The disordered stretch occupies residues 406-426 (VQLPREGQEDQGLTKDFSNSP). Serine 425 carries the post-translational modification Phosphoserine. The region spanning 446–521 (ATLHLSNIPP…HHLRVSFSKS (76 aa)) is the RRM 4 domain.

Interacts with THBS4 (via the acidic amphipathic C-terminus).

Its function is as follows. RNA-binding protein that mediates pre-mRNA alternative splicing regulation. Plays a role in the regulation of cell proliferation, differentiation and migration. Positive regulator of EPO-dependent erythropoiesis. Participates in cell differentiation regulation by repressing tissue-specific exons. Promotes Fas exon 6 skipping. Binds RNA, preferentially to both poly(G) and poly(U). The polypeptide is Polypyrimidine tract-binding protein 3 (Ptbp3) (Mus musculus (Mouse)).